The primary structure comprises 231 residues: MEEITINIDKIKINDDWKEFLRDEFQKKYFLEIKKQYLNAINQNIVIYPPANLIFNAFNLCPLKEIKIIILGQDPYHQPNQAMGLSFSVPKNVKIPPSLNNIFKELQNDLNITPAKSGDLSSWAKQGVLLLNSILSVEANKAASHSSWGWQEFSDAIIHKLSNEKSGLVFMLWGNYAKNKEILIDNTKHLILKAAHPSPLARTGFLGCKHFSKANEFLKKVGKIPIDWKIV.

D74 functions as the Proton acceptor in the catalytic mechanism.

This sequence belongs to the uracil-DNA glycosylase (UDG) superfamily. UNG family.

The protein localises to the cytoplasm. The catalysed reaction is Hydrolyzes single-stranded DNA or mismatched double-stranded DNA and polynucleotides, releasing free uracil.. In terms of biological role, excises uracil residues from the DNA which can arise as a result of misincorporation of dUMP residues by DNA polymerase or due to deamination of cytosine. The polypeptide is Uracil-DNA glycosylase (Campylobacter jejuni (strain RM1221)).